The primary structure comprises 141 residues: Acetyltransferase ECA0875 (141 aa).

Residues 1–141 (MEIRIFRQDD…GKRLIEDREY (141 aa)) enclose the N-acetyltransferase domain.

This sequence belongs to the acetyltransferase family. YpeA subfamily.

This chain is Acetyltransferase ECA0875, found in Pectobacterium atrosepticum (strain SCRI 1043 / ATCC BAA-672) (Erwinia carotovora subsp. atroseptica).